A 698-amino-acid polypeptide reads, in one-letter code: Protein SST2 (698 aa).

The fungal-DR stretch occupies residues 10-203 (ELSSKNFSRT…GAKPNVWSPT (194 aa)). The residue at position 252 (Ser252) is a Phosphoserine. Positions 273–358 (SNAGIRLFEN…SRSSFFTLSK (86 aa)) constitute a DEP domain. Ser408 is modified (phosphoserine). Residues 420–689 (KLDYVLTDPG…TQSDVYKDAS (270 aa)) form the RGS domain. Position 539 is a phosphoserine; by MAPK (Ser539). Positions 545-586 (FPTNLYDPSPASAESAASSISSTEADTLGEPPEVSLKPSKNL) are disordered. A compositionally biased stretch (low complexity) spans 551–570 (DPSPASAESAASSISSTEAD). At Ser587 the chain carries Phosphoserine.

In terms of processing, phosphorylated by FUS3 and KSS1.

In terms of biological role, desensitization to alpha-factor pheromone. Is involved in regulating the signaling pathway for responding to mating pheromone. This Saccharomyces cerevisiae (strain ATCC 204508 / S288c) (Baker's yeast) protein is Protein SST2 (SST2).